Here is a 769-residue protein sequence, read N- to C-terminus: Acetyl-coenzyme A carboxylase carboxyl transferase subunit alpha, chloroplastic (769 aa).

Residues 1–54 (MASISHSSLALGGASSASASDYLRSSSNGVNGVPLKTLGRAVFTTIRRKDLAVT) constitute a chloroplast transit peptide. One can recognise a CoA carboxyltransferase C-terminal domain in the interval 132–385 (LENKYRQALK…KIAINENMNE (254 aa)). Coiled coils occupy residues 426 to 504 (EAVF…ASSE) and 631 to 744 (KQNQ…SDGS). The segment at 718–769 (GLQEKQDELEKELAAARELAAEESDGSVKEDDDDDEDSSESGKSEMVNPSFA) is disordered. The segment covering 721–732 (EKQDELEKELAA) has biased composition (basic and acidic residues). Residues 738-756 (AEESDGSVKEDDDDDEDSS) show a composition bias toward acidic residues. Phosphoserine is present on S741.

The protein belongs to the AccA family. In terms of assembly, acetyl-CoA carboxylase is a heterohexamer composed of biotin carboxyl carrier protein, biotin carboxylase and two subunits each of ACCase subunit alpha and ACCase plastid-coded subunit beta (accD). In terms of tissue distribution, accumulates in fatty acids synthesizing tissues such as embryos, expanding leaves, flower buds, flowers, and developing siliques.

Its subcellular location is the plastid. The protein localises to the chloroplast inner membrane. It carries out the reaction N(6)-carboxybiotinyl-L-lysyl-[protein] + acetyl-CoA = N(6)-biotinyl-L-lysyl-[protein] + malonyl-CoA. It participates in lipid metabolism; malonyl-CoA biosynthesis; malonyl-CoA from acetyl-CoA: step 1/1. Functionally, component of the acetyl coenzyme A carboxylase (ACC) complex. First, biotin carboxylase catalyzes the carboxylation of biotin on its carrier protein (BCCP) and then the CO(2) group is transferred by the carboxyltransferase to acetyl-CoA to form malonyl-CoA. The protein is Acetyl-coenzyme A carboxylase carboxyl transferase subunit alpha, chloroplastic (CAC3) of Arabidopsis thaliana (Mouse-ear cress).